The sequence spans 260 residues: Imidazole glycerol phosphate synthase subunit HisF (260 aa).

Active-site residues include aspartate 11 and aspartate 130.

This sequence belongs to the HisA/HisF family. In terms of assembly, heterodimer of HisH and HisF.

It is found in the cytoplasm. It catalyses the reaction 5-[(5-phospho-1-deoxy-D-ribulos-1-ylimino)methylamino]-1-(5-phospho-beta-D-ribosyl)imidazole-4-carboxamide + L-glutamine = D-erythro-1-(imidazol-4-yl)glycerol 3-phosphate + 5-amino-1-(5-phospho-beta-D-ribosyl)imidazole-4-carboxamide + L-glutamate + H(+). Its pathway is amino-acid biosynthesis; L-histidine biosynthesis; L-histidine from 5-phospho-alpha-D-ribose 1-diphosphate: step 5/9. In terms of biological role, IGPS catalyzes the conversion of PRFAR and glutamine to IGP, AICAR and glutamate. The HisF subunit catalyzes the cyclization activity that produces IGP and AICAR from PRFAR using the ammonia provided by the HisH subunit. The chain is Imidazole glycerol phosphate synthase subunit HisF from Endomicrobium trichonymphae.